The following is a 346-amino-acid chain: 4-hydroxy-3-methylbut-2-enyl diphosphate reductase (346 aa).

C19 is a [4Fe-4S] cluster binding site. The (2E)-4-hydroxy-3-methylbut-2-enyl diphosphate site is built by H48 and H84. Residues H48 and H84 each coordinate dimethylallyl diphosphate. H48 and H84 together coordinate isopentenyl diphosphate. C106 is a binding site for [4Fe-4S] cluster. Position 134 (H134) interacts with (2E)-4-hydroxy-3-methylbut-2-enyl diphosphate. H134 provides a ligand contact to dimethylallyl diphosphate. An isopentenyl diphosphate-binding site is contributed by H134. The active-site Proton donor is the E136. Residue T175 coordinates (2E)-4-hydroxy-3-methylbut-2-enyl diphosphate. C205 provides a ligand contact to [4Fe-4S] cluster. 4 residues coordinate (2E)-4-hydroxy-3-methylbut-2-enyl diphosphate: S233, S234, N235, and S278. 4 residues coordinate dimethylallyl diphosphate: S233, S234, N235, and S278. 4 residues coordinate isopentenyl diphosphate: S233, S234, N235, and S278.

The protein belongs to the IspH family. [4Fe-4S] cluster serves as cofactor.

It catalyses the reaction isopentenyl diphosphate + 2 oxidized [2Fe-2S]-[ferredoxin] + H2O = (2E)-4-hydroxy-3-methylbut-2-enyl diphosphate + 2 reduced [2Fe-2S]-[ferredoxin] + 2 H(+). The catalysed reaction is dimethylallyl diphosphate + 2 oxidized [2Fe-2S]-[ferredoxin] + H2O = (2E)-4-hydroxy-3-methylbut-2-enyl diphosphate + 2 reduced [2Fe-2S]-[ferredoxin] + 2 H(+). Its pathway is isoprenoid biosynthesis; dimethylallyl diphosphate biosynthesis; dimethylallyl diphosphate from (2E)-4-hydroxy-3-methylbutenyl diphosphate: step 1/1. The protein operates within isoprenoid biosynthesis; isopentenyl diphosphate biosynthesis via DXP pathway; isopentenyl diphosphate from 1-deoxy-D-xylulose 5-phosphate: step 6/6. Its function is as follows. Catalyzes the conversion of 1-hydroxy-2-methyl-2-(E)-butenyl 4-diphosphate (HMBPP) into a mixture of isopentenyl diphosphate (IPP) and dimethylallyl diphosphate (DMAPP). Acts in the terminal step of the DOXP/MEP pathway for isoprenoid precursor biosynthesis. This chain is 4-hydroxy-3-methylbut-2-enyl diphosphate reductase, found in Brucella melitensis biotype 1 (strain ATCC 23456 / CCUG 17765 / NCTC 10094 / 16M).